We begin with the raw amino-acid sequence, 414 residues long: Serine--tRNA ligase (414 aa).

230–232 serves as a coordination point for L-serine; sequence TSE. ATP is bound at residue 261–263; that stretch reads RQE. E284 serves as a coordination point for L-serine. Residue 348–351 coordinates ATP; the sequence is EISS. S382 lines the L-serine pocket.

This sequence belongs to the class-II aminoacyl-tRNA synthetase family. Type-1 seryl-tRNA synthetase subfamily. In terms of assembly, homodimer. The tRNA molecule binds across the dimer.

The protein localises to the cytoplasm. The catalysed reaction is tRNA(Ser) + L-serine + ATP = L-seryl-tRNA(Ser) + AMP + diphosphate + H(+). It carries out the reaction tRNA(Sec) + L-serine + ATP = L-seryl-tRNA(Sec) + AMP + diphosphate + H(+). The protein operates within aminoacyl-tRNA biosynthesis; selenocysteinyl-tRNA(Sec) biosynthesis; L-seryl-tRNA(Sec) from L-serine and tRNA(Sec): step 1/1. Catalyzes the attachment of serine to tRNA(Ser). Is also able to aminoacylate tRNA(Sec) with serine, to form the misacylated tRNA L-seryl-tRNA(Sec), which will be further converted into selenocysteinyl-tRNA(Sec). In Campylobacter fetus subsp. fetus (strain 82-40), this protein is Serine--tRNA ligase.